A 129-amino-acid polypeptide reads, in one-letter code: MAFQFPDHFRFADTHEYASLDGDLVRVGISAFAVDQLGDIVFVDLPEVGDLLNRGTTFGSVESVKAVEDLHAPISGELVRINESVLSSPDELQNDPHGEGWLLVVRPADPAQLQDLMDAATYANKVAVE.

One can recognise a Lipoyl-binding domain in the interval 24–106; it reads LVRVGISAFA…HGEGWLLVVR (83 aa). At Lys65 the chain carries N6-lipoyllysine.

The protein belongs to the GcvH family. The glycine cleavage system is composed of four proteins: P, T, L and H. The cofactor is (R)-lipoate.

Its function is as follows. The glycine cleavage system catalyzes the degradation of glycine. The H protein shuttles the methylamine group of glycine from the P protein to the T protein. This chain is Glycine cleavage system H protein, found in Prochlorococcus marinus (strain MIT 9303).